Reading from the N-terminus, the 415-residue chain is Amino acid decarboxylase lolD2 (415 aa).

N6-(pyridoxal phosphate)lysine is present on Lys62. Pyridoxal 5'-phosphate-binding positions include Ser194, Gly231, and Glu266–Thr269. Ile315 to Val316 is a substrate binding site. The active-site Proton donor; shared with dimeric partner is Cys351. Cys351 is subject to S-nitrosocysteine. Position 352 (Asp352) interacts with substrate. Tyr381 provides a ligand contact to pyridoxal 5'-phosphate.

Belongs to the Orn/Lys/Arg decarboxylase class-II family. As to quaternary structure, homodimer. Requires pyridoxal 5'-phosphate as cofactor.

The protein operates within alkaloid biosynthesis. Functionally, amino acid decarboxylase; part of the gene cluster that mediates the biosynthesis of loline alkaloids, potent insecticidal agents composed of a pyrrolizidine ring system and an uncommon ether bridge linking carbons 2 and 7. Lolines are structurally differentiated by the various modifications of the L-amino group and include norloline, loline, N-methylloline, N-acetylloline, N-acetylnorloline, and N-formylloline. The first committed step is the condensation of O-acetyl-L-homoserine (derived from L-aspartic acid) and L-proline, probably catalyzed by the gamma-type pyridoxal 5'-phosphate(PLP)-dependent enzyme lolC, to give the diamino diacid, NACPP. Ensuing cyclization, decarboxylation, and acetylation steps yield 1-exo-acetamidopyrrolizidine (AcAP). LolO is required for installation of the ether bridge upon the pathway intermediate, 1-exo-acetamidopyrrolizidine (AcAP). In sequential 2-oxoglutarate- and O(2)-consuming steps, lolO removes hydrogens from C2 and C7 of AcAP to form both carbon-oxygen bonds in N-acetylnorloline (NANL), the precursor to all other lolines. The enzymes lolD, lolE, lolF and lolT have also been proposed to be involved in the ether-bridge installation. Further processing of the exocyclic moiety of NANL by fungal N-acetamidase (LolN), methyltransferase (LolM), and cytochrome P450 (LolP) enzymes, with occasional involvement of a plant acetyltransferase, generates the other known lolines. LolN transforms NANL to norlonine which is monomethylated and dimethylated to respectively lonine and N-methyllonine (NML) by lolM. LolP catalyzes hydroxylation of the methyl group in N-methylloline (NML) and further oxygenation to N-formylloline (NFL). A plant acetyltransferase is responsible for the acetylation of loline to form N-acetylloline (NAL). LolA might interact with aspartate kinase to prevent feedback inhibition of its activity by these end products and thereby promote production of L-homoserine from L-aspartate. The protein is Amino acid decarboxylase lolD2 of Epichloe uncinata (Endophyte fungus).